Here is a 1059-residue protein sequence, read N- to C-terminus: Putative ATP-dependent RNA helicase BoYb (1059 aa).

The Q motif motif lies at 54-82 (RRFAEVSLLPDILETMRNLGLNRLLRLQS). Positions 87–284 (HLAGGSGHGA…RAVNDKPALV (198 aa)) constitute a Helicase ATP-binding domain. 100-107 (GSPASGRT) is a binding site for ATP. The DEAD box motif lies at 230–233 (DDVD). In terms of domain architecture, Tudor spans 575-639 (PPVAGAICMY…GKLFECPEAL (65 aa)). Residues 756 to 787 (VQDSKEKANSKPHEKMKGKMTDQPAKLQSQPP) are disordered. The segment covering 757 to 775 (QDSKEKANSKPHEKMKGKM) has biased composition (basic and acidic residues).

The protein localises to the cytoplasm. It catalyses the reaction ATP + H2O = ADP + phosphate + H(+). Involved in primary piRNA biogenesis in germline cells. This is Putative ATP-dependent RNA helicase BoYb (BoYb) from Drosophila melanogaster (Fruit fly).